A 410-amino-acid polypeptide reads, in one-letter code: Peptidase T (410 aa).

Residue His-79 participates in Zn(2+) binding. Asp-81 is a catalytic residue. Asp-142 is a Zn(2+) binding site. The Proton acceptor role is filled by Glu-176. Glu-177, Asp-199, and His-381 together coordinate Zn(2+).

It belongs to the peptidase M20B family. Zn(2+) is required as a cofactor.

The protein localises to the cytoplasm. The enzyme catalyses Release of the N-terminal residue from a tripeptide.. Cleaves the N-terminal amino acid of tripeptides. In Bacillus pumilus (strain SAFR-032), this protein is Peptidase T.